A 555-amino-acid chain; its full sequence is Potassium-transporting ATPase potassium-binding subunit (555 aa).

10 consecutive transmembrane segments (helical) span residues 2–22, 60–80, 130–150, 173–193, 246–266, 278–298, 374–394, 412–432, 483–503, and 525–545; these read IWVA…PTGI, QYAL…YFIF, IGIT…VMAF, VFLP…VPQT, MSNI…PFTY, ILFV…TTSE, AGFV…GLMV, LIAV…ALAL, LVMF…AASL, and GIFI…MLVL.

The protein belongs to the KdpA family. In terms of assembly, the system is composed of three essential subunits: KdpA, KdpB and KdpC.

It localises to the cell membrane. Functionally, part of the high-affinity ATP-driven potassium transport (or Kdp) system, which catalyzes the hydrolysis of ATP coupled with the electrogenic transport of potassium into the cytoplasm. This subunit binds the extracellular potassium ions and delivers the ions to the membrane domain of KdpB through an intramembrane tunnel. The protein is Potassium-transporting ATPase potassium-binding subunit of Bacillus cereus (strain Q1).